A 207-amino-acid polypeptide reads, in one-letter code: NADH-quinone oxidoreductase chain 5 (207 aa).

It belongs to the complex I 30 kDa subunit family. As to quaternary structure, NDH-1 is composed of at least 14 different subunits, Nqo1 to Nqo14. The complex has a L-shaped structure, with the hydrophobic arm (subunits Nqo7, Nqo8, Nqo10 to Nqo14) embedded in the inner membrane and the hydrophilic peripheral arm (subunits Nqo1 to Nqo6, Nqo9) protruding into the bacterial cytoplasm. The hydrophilic domain contains all the redox centers.

It localises to the cell inner membrane. It carries out the reaction a quinone + NADH + 5 H(+)(in) = a quinol + NAD(+) + 4 H(+)(out). Its function is as follows. NDH-1 shuttles electrons from NADH, via FMN and iron-sulfur (Fe-S) centers, to quinones in the respiratory chain. The immediate electron acceptor for the enzyme in this species is believed to be ubiquinone. Couples the redox reaction to proton translocation (for every two electrons transferred, four hydrogen ions are translocated across the cytoplasmic membrane), and thus conserves the redox energy in a proton gradient. This chain is NADH-quinone oxidoreductase chain 5 (nqo5), found in Paracoccus denitrificans.